Consider the following 287-residue polypeptide: Pantothenate synthetase (287 aa).

M30–H37 provides a ligand contact to ATP. H37 (proton donor) is an active-site residue. Q61 contacts (R)-pantoate. Q61 is a binding site for beta-alanine. G149–D152 contributes to the ATP binding site. Q155 is a (R)-pantoate binding site. ATP is bound by residues V178 and L186–R189.

It belongs to the pantothenate synthetase family. In terms of assembly, homodimer.

It is found in the cytoplasm. The catalysed reaction is (R)-pantoate + beta-alanine + ATP = (R)-pantothenate + AMP + diphosphate + H(+). The protein operates within cofactor biosynthesis; (R)-pantothenate biosynthesis; (R)-pantothenate from (R)-pantoate and beta-alanine: step 1/1. Functionally, catalyzes the condensation of pantoate with beta-alanine in an ATP-dependent reaction via a pantoyl-adenylate intermediate. The polypeptide is Pantothenate synthetase (Pseudomonas entomophila (strain L48)).